The following is a 67-amino-acid chain: Protein AaeX (67 aa).

The next 2 membrane-spanning stretches (helical) occupy residues 8–28 (VLFGLSFPPAFFALLAALPLF) and 47–67 (PALFNCALYGCLFYLVSWLFI).

It belongs to the AaeX family.

The protein resides in the cell membrane. The chain is Protein AaeX from Edwardsiella piscicida.